A 495-amino-acid chain; its full sequence is WD repeat-containing protein 37 (495 aa).

Residues 1 to 34 (MPTESGSWAAARQTKQKRKSHSLSIKRTNSSEQD) form a disordered region. Positions 22–31 (SLSIKRTNSS) are enriched in polar residues. 2 WD repeats span residues 154–194 (GHRD…CLIK) and 197–236 (GHAG…PTPQ). Positions 237 to 268 (PMADTSQISGEEEVDFSDKDENDGDGDASSDC) are disordered. A compositionally biased stretch (acidic residues) spans 246-264 (GEEEVDFSDKDENDGDGDA). 5 WD repeats span residues 280–319 (SHQG…LVHS), 322–361 (GHDQ…IHSV), 366–404 (GHTD…SPIA), 407–446 (RTDS…LARL), and 453–494 (GHRR…LLQE).

It localises to the cytoplasm. Its subcellular location is the nucleus. The protein is WD repeat-containing protein 37 (wdr37) of Xenopus laevis (African clawed frog).